We begin with the raw amino-acid sequence, 139 residues long: Putative nickel-responsive regulator (139 aa).

Positions 76, 87, 89, and 95 each coordinate Ni(2+).

This sequence belongs to the transcriptional regulatory CopG/NikR family. The cofactor is Ni(2+).

Transcriptional regulator. The chain is Putative nickel-responsive regulator from Rhodopseudomonas palustris (strain HaA2).